We begin with the raw amino-acid sequence, 464 residues long: MQEPRKLYVKSFGCQMNVYDSQRMADALAKEGYVETQDPADADLVILNTCHIREKAAEKVYSELGRLRKAKQDAGSDTTIAVAGCVAQAEGAEIMKRAPVVDLVVGPQSYHRLPEMLARVRDGKRVVDTEFPAEDKFDHLPAPSAAATKKRGPTAFVTVQEGCDKFCTFCVVPYTRGAEVSRSVSKIVGEARALVDQGVREITLIGQNVNAFHGEGPDGRTWGLGRLLEELAGINGLARLRYTTSHPRDMDDGLIAAHRDLPQLMPYLHLPVQSGSDRILAAMNRKHGREIYFEIIDKLRAARPDIALSSDFIVGFPGETEADFEDTLDLARRVGFASAYSFKYSIRPGTPAAEHDHQLSEEVKSERLARLHQVLEASKTAFDRACMGRRFDILLEKPGRLPGQLIGRSPYLQSVVVTAPGAGIGDFVTVDITDVGPNSLAGQVVDAVEDRGRTSDRPLVAMEA.

Positions 5–122 constitute an MTTase N-terminal domain; sequence RKLYVKSFGC…LPEMLARVRD (118 aa). [4Fe-4S] cluster is bound by residues Cys-14, Cys-50, Cys-85, Cys-163, Cys-167, and Cys-170. A Radical SAM core domain is found at 149–383; it reads KKRGPTAFVT…VLEASKTAFD (235 aa). The 63-residue stretch at 384–446 folds into the TRAM domain; it reads RACMGRRFDI…PNSLAGQVVD (63 aa).

This sequence belongs to the methylthiotransferase family. MiaB subfamily. Monomer. [4Fe-4S] cluster serves as cofactor.

It localises to the cytoplasm. It catalyses the reaction N(6)-dimethylallyladenosine(37) in tRNA + (sulfur carrier)-SH + AH2 + 2 S-adenosyl-L-methionine = 2-methylsulfanyl-N(6)-dimethylallyladenosine(37) in tRNA + (sulfur carrier)-H + 5'-deoxyadenosine + L-methionine + A + S-adenosyl-L-homocysteine + 2 H(+). Catalyzes the methylthiolation of N6-(dimethylallyl)adenosine (i(6)A), leading to the formation of 2-methylthio-N6-(dimethylallyl)adenosine (ms(2)i(6)A) at position 37 in tRNAs that read codons beginning with uridine. This Azorhizobium caulinodans (strain ATCC 43989 / DSM 5975 / JCM 20966 / LMG 6465 / NBRC 14845 / NCIMB 13405 / ORS 571) protein is tRNA-2-methylthio-N(6)-dimethylallyladenosine synthase.